The sequence spans 1711 residues: Protein chiffon (1711 aa).

3 disordered regions span residues 1 to 31 (MQPQ…AATP), 87 to 129 (KPEV…SRAD), and 244 to 307 (TKSK…IDSS). Positions 1-400 (MQPQSDKQSA…PALREKSKRI (400 aa)) are sufficient for interaction with and activation of Cdc7. 2 stretches are compositionally biased toward low complexity: residues 10 to 30 (ASRL…TAAT) and 97 to 109 (TPGT…TPTS). S306 and S307 each carry phosphoserine. The DBF4-type zinc-finger motif lies at 307–356 (SEKQGGVCEICKLEYDILNIHLQSKDHELFAKNSDNFLALDTLIQSSADV). Zn(2+)-binding residues include C314, C317, H327, and H333. The span at 365–378 (VESELDMDVDESLS) shows a compositional bias: acidic residues. Disordered stretches follow at residues 365–507 (VESE…DSPS), 531–647 (MFPR…KPQL), 733–771 (LDEE…REQR), 791–817 (TEVK…KVKQ), 908–945 (QDKG…YKNK), 1005–1025 (RSTS…CRNK), 1055–1157 (QRQD…RNQS), 1271–1290 (ESEG…PPTD), 1303–1329 (MGSA…RMSN), 1343–1370 (LKSN…ALPD), and 1383–1644 (LHPI…SKYA). Phosphoserine is present on residues S406, S407, S417, S432, and S435. A compositionally biased stretch (polar residues) spans 429–439 (QGNSPGSLSEL). Positions 445-454 (PTTAAATPTT) are enriched in low complexity. S467 carries the phosphoserine modification. The segment at residues 493 to 505 (PRGRGRPPNQVDS) is a DNA-binding region (a.T hook). The span at 537–546 (VPTTRSSSEL) shows a compositional bias: polar residues. Phosphoserine is present on residues S542, S543, and S544. A compositionally biased stretch (basic and acidic residues) spans 549–560 (DVDRQTTSDVRG). Over residues 563 to 575 (SISSASLDTSTSE) the composition is skewed to low complexity. The segment covering 588–601 (IRKRAQAVGRRRKV) has biased composition (basic residues). Over residues 793–812 (VKTSPSKSRTKIQKPSSPTK) the composition is skewed to polar residues. Basic and acidic residues predominate over residues 908-932 (QDKGEQIKLEDQKPAPKKEVKKEEE). Low complexity predominate over residues 1006-1018 (STSSSSCSNSQRS). A Phosphothreonine modification is found at T1081. A phosphoserine mark is found at S1091 and S1092. The span at 1092–1101 (SPRTTRSQAA) shows a compositional bias: polar residues. The segment covering 1398–1407 (TTTTTTTTTT) has biased composition (low complexity). A sufficient for interaction with Gcn5 region spans residues 1400–1695 (TTTTTTTTSA…NAWRRTQRRA (296 aa)). A compositionally biased stretch (basic and acidic residues) spans 1435–1445 (ADDKQNSREDA). Composition is skewed to acidic residues over residues 1453–1475 (DVDE…DETM) and 1483–1518 (QDVE…EEQD). Composition is skewed to polar residues over residues 1536–1545 (ISVTTPPEDS) and 1556–1591 (HNGQ…SCIS).

In terms of assembly, component of the Dbf4-dependent kinase (DDK) complex consisting of Cdc7 and the Dbf4 ortholog chif. Interacts with Cdc7; the interaction is direct. Interacts with CG5790. As to quaternary structure, component of the Chiffon histone acetyltransferase (CHAT) complex consisting of Ada3, Sgf29, Gcn5, chif/chiffon and Ada2b (Isoform A). Interacts (via C-terminus) with Gcn5; the interaction is direct but weak in the absence of other CHAT components. Post-translationally, may be proteolytically cleaved to produce a N-terminal 50 kDa product.

The protein resides in the nucleus. Its function is as follows. A bicistronic gene producing two proteins that are components of different complexes and have separate properties and functions. Full-length protein is proteolytically cleaved, producing a ~50kDa N-terminal product (Chiffon-A) that forms part of the DDK complex; it is unclear if the C-terminal proteolytic product is stable or functional. Alternative initiation from an internal ribosome entry site produces a C-terminal ~48kDa product (Chiffon-B or Isoform E) that forms part of the CHAT complex. Involved in regulation of gene expression during embryonic development. Regulatory component of the Dbf4-dependent kinase (DDK) complex. Required for the amplification stage, but not the preceding endoreplication stage of DNA replication in egg chamber follicle cells of the ovary. May be involved in initiation of DNA replication; activation of the chorion gene origins. May have a role in eye and thoracic bristle development. Required for female fertility; is not required for oogenesis but is required maternally for early embryo development. Functionally, component of the CHAT histone acetyltransferase complex, which predominantly acetylates histone H3. As part of the CHAT complex involved in acetylation of histone H3 on 'Lys-10' (H3K9ac), 'Lys-15' (H3K14ac) and 'Lys-19' (H3K18ac), but not 'Lys-25' (H3K24ac). May also regulate other histone acetyltransferase complexes. Essential for viability. Not required for early stages of embryonic development. May be involved in zygotic genome activation during embryogenesis. The sequence is that of Protein chiffon from Drosophila melanogaster (Fruit fly).